Here is a 736-residue protein sequence, read N- to C-terminus: Peroxisomal multifunctional enzyme type 2 (736 aa).

The segment at 1–305 (MGSPLRFDGR…IEVLSKIDSE (305 aa)) is (3R)-hydroxyacyl-CoA dehydrogenase. Residues 13–37 (LVTGAGAGLGRAYALAFAERGALVV), leucine 21, and aspartate 40 contribute to the NAD(+) site. N6-acetyllysine; alternate is present on lysine 46. Position 46 is an N6-succinyllysine; alternate (lysine 46). Residue serine 52 is modified to Phosphoserine. N6-succinyllysine is present on residues lysine 57 and lysine 68. 75-76 (SV) is a binding site for NAD(+). Lysine 84 carries the N6-succinyllysine modification. NAD(+) is bound at residue asparagine 99. Serine 151 serves as a coordination point for substrate. Tyrosine 164 (proton acceptor) is an active-site residue. NAD(+) contacts are provided by residues 164-168 (YSAAK) and 196-199 (AGSR). Threonine 265 is modified (phosphothreonine). Lysine 275 is modified (N6-succinyllysine). 2 positions are modified to phosphoserine: serine 304 and serine 309. The interval 322 to 622 (SGFAGAIGQK…AKTPSEGGKL (301 aa)) is enoyl-CoA hydratase 2. Lysine 356 is modified (N6-succinyllysine). 406–407 (HG) is a (3R)-3-hydroxydecanoyl-CoA binding site. Lysine 424 is subject to N6-succinyllysine. (3R)-3-hydroxydecanoyl-CoA-binding positions include lysine 435, 510 to 515 (DWNPLH), glycine 533, and phenylalanine 563. The MaoC-like domain occupies 484–600 (IPNRPPDAVL…QETGDIVISN (117 aa)). At lysine 565 the chain carries N6-acetyllysine. An N6-succinyllysine mark is found at lysine 579 and lysine 663. An SCP2 domain is found at 624–736 (STFVFEEIGR…QMILKDYAKL (113 aa)). Residue lysine 669 is modified to N6-acetyllysine. Glutamine 706 contacts substrate. Lysine 707 carries the post-translational modification N6-acetyllysine. Glutamine 724 provides a ligand contact to substrate. Lysine 725 bears the N6-succinyllysine mark. Residues 734 to 736 (AKL) carry the Microbody targeting signal motif.

The protein belongs to the short-chain dehydrogenases/reductases (SDR) family. As to quaternary structure, homodimer. In terms of tissue distribution, present in many tissues with highest concentrations in liver, heart, prostate and testis.

It localises to the peroxisome. The enzyme catalyses a (3R)-3-hydroxyacyl-CoA + NAD(+) = a 3-oxoacyl-CoA + NADH + H(+). The catalysed reaction is a (3R)-3-hydroxyacyl-CoA = a (2E)-enoyl-CoA + H2O. It catalyses the reaction (24R,25R)-3alpha,7alpha,12alpha,24-tetrahydroxy-5beta-cholestan-26-oyl-CoA = (24E)-3alpha,7alpha,12alpha-trihydroxy-5beta-cholest-24-en-26-oyl-CoA + H2O. It carries out the reaction (2E)-octenoyl-CoA + H2O = (3R)-hydroxyoctanoyl-CoA. The enzyme catalyses (3R)-hydroxyoctanoyl-CoA + NAD(+) = 3-oxooctanoyl-CoA + NADH + H(+). The catalysed reaction is (3R)-hydroxyhexadecanoyl-CoA + NAD(+) = 3-oxohexadecanoyl-CoA + NADH + H(+). It catalyses the reaction (2E)-hexadecenedioyl-CoA + H2O = (3R)-hydroxyhexadecanedioyl-CoA. It carries out the reaction (3R)-hydroxyhexadecanedioyl-CoA + NAD(+) = 3-oxohexadecanedioyl-CoA + NADH + H(+). The enzyme catalyses (3R)-hydroxyhexadecanoyl-CoA = (2E)-hexadecenoyl-CoA + H2O. The catalysed reaction is (3R)-3-hydroxydecanoyl-CoA = (2E)-decenoyl-CoA + H2O. It catalyses the reaction (3R)-3-hydroxydecanoyl-CoA + NAD(+) = 3-oxodecanoyl-CoA + NADH + H(+). It carries out the reaction (24R,25R)-3alpha,7alpha,12alpha,24-tetrahydroxy-5beta-cholestan-26-oyl-CoA + NAD(+) = 3alpha,7alpha,12alpha-trihydroxy-24-oxo-5beta-cholestan-26-oyl-CoA + NADH + H(+). It functions in the pathway lipid metabolism; fatty acid beta-oxidation. Its function is as follows. Bifunctional enzyme acting on the peroxisomal fatty acid beta-oxidation pathway. Catalyzes two of the four reactions in fatty acid degradation: hydration of 2-enoyl-CoA (trans-2-enoyl-CoA) to produce (3R)-3-hydroxyacyl-CoA, and dehydrogenation of (3R)-3-hydroxyacyl-CoA to produce 3-ketoacyl-CoA (3-oxoacyl-CoA), which is further metabolized by SCPx. Can use straight-chain and branched-chain fatty acids, as well as bile acid intermediates as substrates. This chain is Peroxisomal multifunctional enzyme type 2, found in Homo sapiens (Human).